Reading from the N-terminus, the 130-residue chain is DNA-directed RNA polymerase subunit omega (130 aa).

Residues 107–130 form a disordered region; that stretch reads SLDVSQESHDDEIDDQDSGEEVPI. Positions 115 to 130 are enriched in acidic residues; that stretch reads HDDEIDDQDSGEEVPI.

It belongs to the RNA polymerase subunit omega family. As to quaternary structure, the RNAP catalytic core consists of 2 alpha, 1 beta, 1 beta' and 1 omega subunit. When a sigma factor is associated with the core the holoenzyme is formed, which can initiate transcription.

It carries out the reaction RNA(n) + a ribonucleoside 5'-triphosphate = RNA(n+1) + diphosphate. Promotes RNA polymerase assembly. Latches the N- and C-terminal regions of the beta' subunit thereby facilitating its interaction with the beta and alpha subunits. The sequence is that of DNA-directed RNA polymerase subunit omega from Wolbachia pipientis subsp. Culex pipiens (strain wPip).